A 153-amino-acid chain; its full sequence is Endoribonuclease YbeY (153 aa).

Zn(2+) is bound by residues His114, His118, and His124.

The protein belongs to the endoribonuclease YbeY family. Zn(2+) serves as cofactor.

It localises to the cytoplasm. Functionally, single strand-specific metallo-endoribonuclease involved in late-stage 70S ribosome quality control and in maturation of the 3' terminus of the 16S rRNA. The protein is Endoribonuclease YbeY of Shewanella amazonensis (strain ATCC BAA-1098 / SB2B).